Reading from the N-terminus, the 73-residue chain is Large ribosomal subunit protein bL31 (73 aa).

The Zn(2+) site is built by Cys16, Cys18, Cys36, and Cys39.

Belongs to the bacterial ribosomal protein bL31 family. Type A subfamily. Part of the 50S ribosomal subunit. Requires Zn(2+) as cofactor.

Functionally, binds the 23S rRNA. The protein is Large ribosomal subunit protein bL31 of Desulfotalea psychrophila (strain LSv54 / DSM 12343).